The sequence spans 183 residues: NEDD8-conjugating enzyme Ubc12 (183 aa).

Position 1 is an N-acetylmethionine (Met-1). The tract at residues 1–28 (MIKLFSLKQQKKEEESAGGTKGSSKKAS) is disordered. One can recognise a UBC core domain in the interval 29–173 (AAQLRIQKDI…VQRSMRGGYI (145 aa)). Residue Cys-111 is the Glycyl thioester intermediate of the active site.

The protein belongs to the ubiquitin-conjugating enzyme family. UBC12 subfamily. The acetylation of Met-1 increases affinity for DCUN1D1 by about 2 orders of magnitude and is crucial for NEDD8 transfer to cullins.

It catalyses the reaction [E1 NEDD8-activating enzyme]-S-[NEDD8 protein]-yl-L-cysteine + [E2 NEDD8-conjugating enzyme]-L-cysteine = [E1 NEDD8-activating enzyme]-L-cysteine + [E2 NEDD8-conjugating enzyme]-S-[NEDD8-protein]-yl-L-cysteine.. Its pathway is protein modification; protein neddylation. Accepts the ubiquitin-like protein NEDD8 from the UBA3-NAE1 E1 complex and catalyzes its covalent attachment to other proteins. The specific interaction with the E3 ubiquitin ligase rbx1, but not rbx2, suggests that the rbx1-ube2m complex neddylates specific target proteins, such as cul1, cul2, cul3 and cul4. Involved in cell proliferation. This is NEDD8-conjugating enzyme Ubc12 (ube2m) from Xenopus tropicalis (Western clawed frog).